A 101-amino-acid chain; its full sequence is DNA-binding protein Fis (101 aa).

A DNA-binding region (H-T-H motif) is located at residues 77–96; sequence QTRAANMLGINRGTLRKKLK.

It belongs to the transcriptional regulatory Fis family. In terms of assembly, homodimer.

Activates ribosomal RNA transcription. Plays a direct role in upstream activation of rRNA promoters. The protein is DNA-binding protein Fis of Shewanella frigidimarina (strain NCIMB 400).